A 201-amino-acid polypeptide reads, in one-letter code: Lymphocyte antigen 6 complex locus protein G5b (201 aa).

The N-terminal stretch at 1–18 is a signal peptide; the sequence is MKVHMLVGVLVMVGFTVG. Positions 26–118 constitute a UPAR/Ly6 domain; that stretch reads RTCHFCLVED…SPQLQSSLPE (93 aa). Disulfide bonds link Cys-28-Cys-55, Cys-31-Cys-40, Cys-47-Cys-73, Cys-81-Cys-98, and Cys-99-Cys-104. Residues Asn-141 and Asn-183 are each glycosylated (N-linked (GlcNAc...) asparagine).

Forms oligomer. Post-translationally, N-glycosylated.

It localises to the secreted. In Homo sapiens (Human), this protein is Lymphocyte antigen 6 complex locus protein G5b (LY6G5B).